The primary structure comprises 302 residues: G-protein coupled receptor A5 (302 aa).

The Extracellular portion of the chain corresponds to 1–20 (MADSSNSSLNCTAIHDQTVL). The helical transmembrane segment at 21–41 (ILGQVFNSVWLFISVIFLYIF) threads the bilayer. The Cytoplasmic segment spans residues 42–50 (ACKLCFRPR). The helical transmembrane segment at 51–71 (IYLWLSFYTLGFMLWVLCKVL) threads the bilayer. Over 72-81 (QEYVTGKFKC) the chain is Extracellular. Residues 82–102 (VITNCIGDFCLVFLSCIMLGI) form a helical membrane-spanning segment. Residues 103 to 122 (MLDRYLKIQGTLRGGMKDIH) lie on the Cytoplasmic side of the membrane. Residues 123 to 143 (IGIFVSASCFGSLMIALLDGL) form a helical membrane-spanning segment. Residues 144–173 (HMGDSEKLQFNGTESFKCLPATSVSSYKAQ) lie on the Extracellular side of the membrane. A helical transmembrane segment spans residues 174 to 194 (LMFKSIFCIICIIMCLILTCL). The Cytoplasmic segment spans residues 195–208 (TAKKVLGTRLRKKY). A helical membrane pass occupies residues 209 to 229 (VIVGNVGLLSFVNILLWVMIA). The Extracellular segment spans residues 230–249 (CGLLKQALESNLSLCPTKQS). The helical transmembrane segment at 250–270 (TYIYPYTMPVTVIFVLVIYLF) threads the bilayer. Topologically, residues 271–302 (SSTHMKNAMRKSGQIRHSLSSPNQVQSSFRLV) are cytoplasmic.

The protein belongs to the G-protein coupled receptor 1 family.

The protein localises to the host cell membrane. It localises to the host endoplasmic reticulum membrane. In terms of biological role, acts as a viral G-protein coupled receptor that constitutively activates host alphai-type G-proteins, thereby inhibiting host forskolin-triggered CREB activation. The chain is G-protein coupled receptor A5 (A5) from Connochaetes taurinus (Blue wildebeest).